The following is a 356-amino-acid chain: Biotin synthase (356 aa).

A Radical SAM core domain is found at G54 to L278. Residues C69, C73, and C76 each contribute to the [4Fe-4S] cluster site. C113, C144, C204, and R282 together coordinate [2Fe-2S] cluster.

The protein belongs to the radical SAM superfamily. Biotin synthase family. As to quaternary structure, homodimer. The cofactor is [4Fe-4S] cluster. [2Fe-2S] cluster is required as a cofactor.

The catalysed reaction is (4R,5S)-dethiobiotin + (sulfur carrier)-SH + 2 reduced [2Fe-2S]-[ferredoxin] + 2 S-adenosyl-L-methionine = (sulfur carrier)-H + biotin + 2 5'-deoxyadenosine + 2 L-methionine + 2 oxidized [2Fe-2S]-[ferredoxin]. Its pathway is cofactor biosynthesis; biotin biosynthesis; biotin from 7,8-diaminononanoate: step 2/2. Its function is as follows. Catalyzes the conversion of dethiobiotin (DTB) to biotin by the insertion of a sulfur atom into dethiobiotin via a radical-based mechanism. The polypeptide is Biotin synthase (Novosphingobium aromaticivorans (strain ATCC 700278 / DSM 12444 / CCUG 56034 / CIP 105152 / NBRC 16084 / F199)).